The primary structure comprises 227 residues: Cytochrome c oxidase subunit 2 (227 aa).

Topologically, residues 1–14 (MAYPLQLGLQDATS) are mitochondrial intermembrane. The helical transmembrane segment at 15-45 (PIMEELMNFHDHTLMIVFLISSLVLYVISSM) threads the bilayer. Topologically, residues 46-59 (LTTKLTHTSTMDAQ) are mitochondrial matrix. Residues 60-87 (EVETIWTILPAVILIMIALPSLRILYMM) traverse the membrane as a helical segment. Over 88 to 227 (DEINNPVLTV…NFETWSVSMI (140 aa)) the chain is Mitochondrial intermembrane. 6 residues coordinate Cu cation: histidine 161, cysteine 196, glutamate 198, cysteine 200, histidine 204, and methionine 207. A Mg(2+)-binding site is contributed by glutamate 198.

This sequence belongs to the cytochrome c oxidase subunit 2 family. In terms of assembly, component of the cytochrome c oxidase (complex IV, CIV), a multisubunit enzyme composed of 14 subunits. The complex is composed of a catalytic core of 3 subunits MT-CO1, MT-CO2 and MT-CO3, encoded in the mitochondrial DNA, and 11 supernumerary subunits COX4I, COX5A, COX5B, COX6A, COX6B, COX6C, COX7A, COX7B, COX7C, COX8 and NDUFA4, which are encoded in the nuclear genome. The complex exists as a monomer or a dimer and forms supercomplexes (SCs) in the inner mitochondrial membrane with NADH-ubiquinone oxidoreductase (complex I, CI) and ubiquinol-cytochrome c oxidoreductase (cytochrome b-c1 complex, complex III, CIII), resulting in different assemblies (supercomplex SCI(1)III(2)IV(1) and megacomplex MCI(2)III(2)IV(2)). Found in a complex with TMEM177, COA6, COX18, COX20, SCO1 and SCO2. Interacts with TMEM177 in a COX20-dependent manner. Interacts with COX20. Interacts with COX16. Cu cation is required as a cofactor.

Its subcellular location is the mitochondrion inner membrane. It carries out the reaction 4 Fe(II)-[cytochrome c] + O2 + 8 H(+)(in) = 4 Fe(III)-[cytochrome c] + 2 H2O + 4 H(+)(out). In terms of biological role, component of the cytochrome c oxidase, the last enzyme in the mitochondrial electron transport chain which drives oxidative phosphorylation. The respiratory chain contains 3 multisubunit complexes succinate dehydrogenase (complex II, CII), ubiquinol-cytochrome c oxidoreductase (cytochrome b-c1 complex, complex III, CIII) and cytochrome c oxidase (complex IV, CIV), that cooperate to transfer electrons derived from NADH and succinate to molecular oxygen, creating an electrochemical gradient over the inner membrane that drives transmembrane transport and the ATP synthase. Cytochrome c oxidase is the component of the respiratory chain that catalyzes the reduction of oxygen to water. Electrons originating from reduced cytochrome c in the intermembrane space (IMS) are transferred via the dinuclear copper A center (CU(A)) of subunit 2 and heme A of subunit 1 to the active site in subunit 1, a binuclear center (BNC) formed by heme A3 and copper B (CU(B)). The BNC reduces molecular oxygen to 2 water molecules using 4 electrons from cytochrome c in the IMS and 4 protons from the mitochondrial matrix. This Malacothrix typica (Long-eared mouse) protein is Cytochrome c oxidase subunit 2 (MT-CO2).